The sequence spans 99 residues: Protein AC150 (99 aa).

The Chitin-binding type-2 domain maps to 38 to 96 (GFSCYNKPIGVNFPHPTRCDAFYMCVGLNQKLELICPEGFEFDPDVKNCVPISDYGCTA). Cysteines 73 and 86 form a disulfide.

Its subcellular location is the host nucleus. The protein resides in the virion. Its function is as follows. Plays a role in primary oral infection of the host. This is Protein AC150 from Autographa californica nuclear polyhedrosis virus (AcMNPV).